A 500-amino-acid polypeptide reads, in one-letter code: Cytochrome P450 2D15 (500 aa).

A heme-binding site is contributed by Cys-446.

This sequence belongs to the cytochrome P450 family. The cofactor is heme. Liver. Also detected in several other tissues.

It localises to the endoplasmic reticulum membrane. Its subcellular location is the microsome membrane. The enzyme catalyses an organic molecule + reduced [NADPH--hemoprotein reductase] + O2 = an alcohol + oxidized [NADPH--hemoprotein reductase] + H2O + H(+). High activity for the hydroxylation of bunitrolol and imipramine; low activity on debrisoquine. The protein is Cytochrome P450 2D15 (CYP2D15) of Canis lupus familiaris (Dog).